The following is a 175-amino-acid chain: Gamma-crystallin B (175 aa).

2 consecutive Beta/gamma crystallin 'Greek key' domains span residues 2-40 (GKIT…RVES) and 41-83 (GCWM…CLIP). The interval 84–88 (PHSGA) is connecting peptide. Beta/gamma crystallin 'Greek key' domains lie at 89–129 (YRMK…NVLE) and 130–172 (GSWI…RRVM).

Belongs to the beta/gamma-crystallin family. As to quaternary structure, monomer.

In terms of biological role, crystallins are the dominant structural components of the vertebrate eye lens. The protein is Gamma-crystallin B (CRYGB) of Homo sapiens (Human).